Consider the following 466-residue polypeptide: UDP-N-acetylmuramate--L-alanine ligase (466 aa).

117 to 123 (GTHGKTT) lines the ATP pocket.

The protein belongs to the MurCDEF family.

Its subcellular location is the cytoplasm. It carries out the reaction UDP-N-acetyl-alpha-D-muramate + L-alanine + ATP = UDP-N-acetyl-alpha-D-muramoyl-L-alanine + ADP + phosphate + H(+). Its pathway is cell wall biogenesis; peptidoglycan biosynthesis. Its function is as follows. Cell wall formation. The polypeptide is UDP-N-acetylmuramate--L-alanine ligase (Streptomyces griseus subsp. griseus (strain JCM 4626 / CBS 651.72 / NBRC 13350 / KCC S-0626 / ISP 5235)).